The primary structure comprises 369 residues: Histidinol-phosphate aminotransferase (369 aa).

Lysine 223 is subject to N6-(pyridoxal phosphate)lysine.

This sequence belongs to the class-II pyridoxal-phosphate-dependent aminotransferase family. Histidinol-phosphate aminotransferase subfamily. Homodimer. It depends on pyridoxal 5'-phosphate as a cofactor.

It carries out the reaction L-histidinol phosphate + 2-oxoglutarate = 3-(imidazol-4-yl)-2-oxopropyl phosphate + L-glutamate. Its pathway is amino-acid biosynthesis; L-histidine biosynthesis; L-histidine from 5-phospho-alpha-D-ribose 1-diphosphate: step 7/9. The sequence is that of Histidinol-phosphate aminotransferase from Shouchella clausii (strain KSM-K16) (Alkalihalobacillus clausii).